Consider the following 306-residue polypeptide: Tyrosine recombinase XerC (306 aa).

A Core-binding (CB) domain is found at 1-90 (MYVHIDNFLV…AWRSFYRYLY (90 aa)). The 188-residue stretch at 111 to 298 (RLPRFLYEDE…TGERLKKVYR (188 aa)) folds into the Tyr recombinase domain. Residues arginine 151, lysine 175, histidine 250, arginine 253, and histidine 276 contribute to the active site. Tyrosine 285 (O-(3'-phospho-DNA)-tyrosine intermediate) is an active-site residue.

It belongs to the 'phage' integrase family. XerC subfamily. In terms of assembly, forms a cyclic heterotetrameric complex composed of two molecules of XerC and two molecules of XerD.

The protein localises to the cytoplasm. Functionally, site-specific tyrosine recombinase, which acts by catalyzing the cutting and rejoining of the recombining DNA molecules. The XerC-XerD complex is essential to convert dimers of the bacterial chromosome into monomers to permit their segregation at cell division. It also contributes to the segregational stability of plasmids. This chain is Tyrosine recombinase XerC, found in Pelotomaculum thermopropionicum (strain DSM 13744 / JCM 10971 / SI).